A 129-amino-acid polypeptide reads, in one-letter code: Transcription antitermination protein NusB (129 aa).

This sequence belongs to the NusB family.

Its function is as follows. Involved in transcription antitermination. Required for transcription of ribosomal RNA (rRNA) genes. Binds specifically to the boxA antiterminator sequence of the ribosomal RNA (rrn) operons. The sequence is that of Transcription antitermination protein NusB from Staphylococcus epidermidis (strain ATCC 35984 / DSM 28319 / BCRC 17069 / CCUG 31568 / BM 3577 / RP62A).